A 296-amino-acid chain; its full sequence is Fructose-bisphosphate aldolase class 1 (296 aa).

Glutamate 175 functions as the Proton acceptor in the catalytic mechanism. The active-site Schiff-base intermediate with dihydroxyacetone-P is lysine 212.

This sequence belongs to the class I fructose-bisphosphate aldolase family.

It carries out the reaction beta-D-fructose 1,6-bisphosphate = D-glyceraldehyde 3-phosphate + dihydroxyacetone phosphate. It participates in carbohydrate degradation; glycolysis; D-glyceraldehyde 3-phosphate and glycerone phosphate from D-glucose: step 4/4. This chain is Fructose-bisphosphate aldolase class 1, found in Staphylococcus aureus (strain MRSA252).